A 227-amino-acid polypeptide reads, in one-letter code: MANPSCRLLSFGLVPYCQAWQYQRRWVRAKQRDRQREDGLMLLEHPPVYTLGTGSQTKYLKFDPAYPPAELWRTERGGEVTYHCPGQLVGYPILDLNHFQKDLHWYLRQLEEVLIITLEKLDLQGERIAGLTGVWLEGHKVAAIAIKVSGWVTCHGFALNICPDLEGFSHIVPCGIGDRPVGSLNQFLPGLTVEIVQPLVIQAFAEVFPVTWIATGEMPCWLSDDVA.

A BPL/LPL catalytic domain is found at 34 to 212; that stretch reads RQREDGLMLL…AFAEVFPVTW (179 aa). Substrate contacts are provided by residues 76-83, 143-145, and 156-158; these read RGGEVTYH, AIA, and GFA. Residue C174 is the Acyl-thioester intermediate of the active site.

The protein belongs to the LipB family.

It localises to the cytoplasm. The enzyme catalyses octanoyl-[ACP] + L-lysyl-[protein] = N(6)-octanoyl-L-lysyl-[protein] + holo-[ACP] + H(+). The protein operates within protein modification; protein lipoylation via endogenous pathway; protein N(6)-(lipoyl)lysine from octanoyl-[acyl-carrier-protein]: step 1/2. In terms of biological role, catalyzes the transfer of endogenously produced octanoic acid from octanoyl-acyl-carrier-protein onto the lipoyl domains of lipoate-dependent enzymes. Lipoyl-ACP can also act as a substrate although octanoyl-ACP is likely to be the physiological substrate. The chain is Octanoyltransferase from Synechocystis sp. (strain ATCC 27184 / PCC 6803 / Kazusa).